Consider the following 338-residue polypeptide: uncharacterized protein (338 aa).

3 consecutive transmembrane segments (helical) span residues 11 to 31 (ILSL…TFAI), 249 to 269 (IAVF…IIPA), and 318 to 338 (VPTP…GLGL).

It is found in the cell membrane. This is an uncharacterized protein from Methanocaldococcus jannaschii (strain ATCC 43067 / DSM 2661 / JAL-1 / JCM 10045 / NBRC 100440) (Methanococcus jannaschii).